We begin with the raw amino-acid sequence, 412 residues long: NAD-dependent dihydropyrimidine dehydrogenase subunit PreT (412 aa).

An NAD(+)-binding site is contributed by E286.

It belongs to the NADH dehydrogenase family. As to quaternary structure, heterotetramer of 2 PreA and 2 PreT subunits.

It carries out the reaction 5,6-dihydrouracil + NAD(+) = uracil + NADH + H(+). The enzyme catalyses 5,6-dihydrothymine + NAD(+) = thymine + NADH + H(+). Functionally, involved in pyrimidine base degradation. Catalyzes physiologically the reduction of uracil to 5,6-dihydrouracil (DHU) by using NADH as a specific cosubstrate. It also catalyzes the reverse reaction and the reduction of thymine to 5,6-dihydrothymine (DHT). In Escherichia coli O157:H7, this protein is NAD-dependent dihydropyrimidine dehydrogenase subunit PreT (preT).